We begin with the raw amino-acid sequence, 92 residues long: Small ribosomal subunit protein uS19c (92 aa).

This sequence belongs to the universal ribosomal protein uS19 family.

The protein localises to the plastid. It is found in the chloroplast. Protein S19 forms a complex with S13 that binds strongly to the 16S ribosomal RNA. The polypeptide is Small ribosomal subunit protein uS19c (rps19) (Pinus thunbergii (Japanese black pine)).